Here is a 319-residue protein sequence, read N- to C-terminus: tRNA uridine(34) hydroxylase (319 aa).

A Rhodanese domain is found at 127-221; the sequence is KQEDTVIIDA…YGKDPEVQGE (95 aa). Cys-181 (cysteine persulfide intermediate) is an active-site residue.

This sequence belongs to the TrhO family.

It catalyses the reaction uridine(34) in tRNA + AH2 + O2 = 5-hydroxyuridine(34) in tRNA + A + H2O. Functionally, catalyzes oxygen-dependent 5-hydroxyuridine (ho5U) modification at position 34 in tRNAs. The sequence is that of tRNA uridine(34) hydroxylase from Bacillus anthracis (strain A0248).